Reading from the N-terminus, the 191-residue chain is Small ribosomal subunit protein uS5 (191 aa).

The disordered stretch occupies residues 1–21 (MAAERERGGRERSREREERDS). The S5 DRBM domain maps to 23–86 (FVDKLVHINR…ESAKRNLTRV (64 aa)).

Part of the 30S ribosomal subunit. Contacts proteins S4 and S8.

Functionally, with S4 and S12 plays an important role in translational accuracy. Its function is as follows. Located at the back of the 30S subunit body where it stabilizes the conformation of the head with respect to the body. In Rhodopseudomonas palustris (strain ATCC BAA-98 / CGA009), this protein is Small ribosomal subunit protein uS5.